The following is a 265-amino-acid chain: MKFTIMSKGDQSSDTLASTMKEYLLDFGFIMDEQEPDIVISVGGDGTLLYAFHRYYNRLDETAFVGVHTGHLGFYADWLPTEVEKLVIAIAKTPFQVVEYPLLEVIIRYMNGSKESQYLAMNEATVKSAEGTLVTEVEIRGEYFETFRGDGLCISTPSGSTAYNKALGGAIIHPSIEAIQIAEMASINNRVFRTVGSPLVLPKHHTCVLKPTAGMNLQITVDHLTMVHQDVKSIQYRVANEKVRFVRFRPFPFWKRVRDSFVADK.

Catalysis depends on D45, which acts as the Proton acceptor. Residues 45 to 46 (DG), 122 to 123 (NE), R148, D150, and A185 contribute to the NAD(+) site.

This sequence belongs to the NAD kinase family. A divalent metal cation serves as cofactor.

It localises to the cytoplasm. The enzyme catalyses NAD(+) + ATP = ADP + NADP(+) + H(+). Functionally, involved in the regulation of the intracellular balance of NAD and NADP, and is a key enzyme in the biosynthesis of NADP. Catalyzes specifically the phosphorylation on 2'-hydroxyl of the adenosine moiety of NAD to yield NADP. The sequence is that of NAD kinase 1 from Bacillus anthracis.